We begin with the raw amino-acid sequence, 478 residues long: MVHSSMGAPEIRMSKPLEAEKQGLDSPSEHTDTERNGPDTNHQNPQNKTSPFSVSPTGPSTKIKAEDPSGDSAPAGPPPPQAVQAHLSQVQLMLTGRQLAGDIQQILQLQQLVLVPGHHLQPPAQFLLPQAQQSQPGLLPTPNLFQLPQQTQGALLTSQPRAGLPTQAVTRPTLSDPHLSHPQPPKCLEPPSHPEEASDLEELEQFARTFKQRRIKLGFTQGDVGLAMGKLYGNDFSQTTISRFEALNLSFKNMCKLKPLLEKWLNDAETMSVDSSLPSPNQLSRPSLGFDGLPGRRRKKRTSIETNVRFALEKSFLANQKPTSEEILLIAEQLHMEKEVIRVWFCNRRQKEKRINPCSAAPMLPSPGKPASYSPHLVTPQGGAGTLPLSQASSSLSTTVTTLSSAVGTLHPSRTAGGGAAGGGAAPPLNSIPSVTPPPPATTNSTNPSPQGSHSAIGLSGLNPSTGPGLWNPAPYQP.

5 disordered regions span residues 1–82 (MVHS…PPQA), 167–199 (QAVT…EASD), 275–298 (SSLP…GRRR), 357–391 (PCSA…PLSQ), and 409–478 (TLHP…PYQP). Over residues 12–37 (RMSKPLEAEKQGLDSPSEHTDTERNG) the composition is skewed to basic and acidic residues. The span at 38–60 (PDTNHQNPQNKTSPFSVSPTGPS) shows a compositional bias: polar residues. The POU-specific domain maps to 195–269 (EEASDLEELE…LLEKWLNDAE (75 aa)). Positions 275–285 (SSLPSPNQLSR) are enriched in polar residues. A DNA-binding region (homeobox) is located at residues 297-356 (RRKKRTSIETNVRFALEKSFLANQKPTSEEILLIAEQLHMEKEVIRVWFCNRRQKEKRIN). A leucine-zipper region spans residues 389-410 (LSQASSSLSTTVTTLSSAVGTL). Residues 416 to 425 (AGGGAAGGGA) show a composition bias toward gly residues.

Belongs to the POU transcription factor family. Class-2 subfamily. In terms of assembly, interacts with NR3C1, AR and PGR. Interacts with POU2AF1; the interaction increases POU2F2 transactivation activity. As to expression, predominantly expressed in B-cells.

The protein resides in the nucleus. With respect to regulation, transactivation activity is enhanced by transcriptional coactivator POU2AF1. Transcription factor that specifically binds to the octamer motif (5'-ATTTGCAT-3'). Regulates IL6 expression in B cells with POU2AF1. Regulates transcription in a number of tissues in addition to activating immunoglobulin gene expression. Modulates transcription transactivation by NR3C1, AR and PGR. The polypeptide is POU domain, class 2, transcription factor 2 (POU2F2) (Sus scrofa (Pig)).